The following is an 89-amino-acid chain: Elongation factor 1-beta (89 aa).

It belongs to the EF-1-beta/EF-1-delta family.

Its function is as follows. Promotes the exchange of GDP for GTP in EF-1-alpha/GDP, thus allowing the regeneration of EF-1-alpha/GTP that could then be used to form the ternary complex EF-1-alpha/GTP/AAtRNA. The polypeptide is Elongation factor 1-beta (Methanobrevibacter smithii (strain ATCC 35061 / DSM 861 / OCM 144 / PS)).